The primary structure comprises 332 residues: Autoinducer 2 import system permease protein LsrD (332 aa).

A run of 10 helical transmembrane segments spans residues 7–27 (YSWE…FGVI), 45–65 (ICIG…GMDI), 70–90 (TIGL…PLPL), 91–111 (AIII…GLII), 118–138 (LVIT…LSGM), 162–182 (FLGI…FWLL), 216–236 (VYAM…SYFG), 240–260 (SDLG…GGAN), 261–281 (IYGG…VGFL), and 288–308 (AGVP…VVVV).

This sequence belongs to the binding-protein-dependent transport system permease family. AraH/RbsC subfamily. As to quaternary structure, the complex is composed of two ATP-binding proteins (LsrA), two transmembrane proteins (LsrC and LsrD) and a solute-binding protein (LsrB).

Its subcellular location is the cell inner membrane. Functionally, part of the ABC transporter complex LsrABCD involved in autoinducer 2 (AI-2) import. Probably responsible for the translocation of the substrate across the membrane. The protein is Autoinducer 2 import system permease protein LsrD (lsrD) of Salmonella paratyphi A (strain ATCC 9150 / SARB42).